We begin with the raw amino-acid sequence, 385 residues long: MTEREQFFRDVNKIVIKIGTSSITRKGCDHTRENCNIDPAFMESIAFQVSELRKQGKEVIIVSSGAIGVGLNELGIAPKPREIPIRQAAAAVGQSMLMQDWSRAFSRYGMKVAQILLTYEFYSDRVTYLNLRNSISTLLEYGVVPIINENDCTCTNEIEAIFGDNDKLSAMVASKIDADLLIILSDIDGLFDRNPKTHIDAKLLTIVKKITPEIESYGGDPTSFKGVGGMRTKIKAAKICSMAGCYVVIANSDVEDVILKIASGEEIGTLFLAERHIQKNRARWIILARASGTVRVDAGAKAAVLGKNSLLPAGVVDVEGTFDRGDVVKLECDGKIFAKGITDYTSEELIKIKGVHTDQIENVLGYSNYNNVIKKENIGILEELN.

Lys-17 is an ATP binding site. Substrate-binding residues include Ser-64, Asp-151, and Asn-165. ATP is bound at residue 185-186 (SD). The PUA domain maps to 291–367 (SGTVRVDAGA…DQIENVLGYS (77 aa)).

The protein belongs to the glutamate 5-kinase family.

The protein resides in the cytoplasm. It carries out the reaction L-glutamate + ATP = L-glutamyl 5-phosphate + ADP. The protein operates within amino-acid biosynthesis; L-proline biosynthesis; L-glutamate 5-semialdehyde from L-glutamate: step 1/2. In terms of biological role, catalyzes the transfer of a phosphate group to glutamate to form L-glutamate 5-phosphate. This Methanosarcina mazei (strain ATCC BAA-159 / DSM 3647 / Goe1 / Go1 / JCM 11833 / OCM 88) (Methanosarcina frisia) protein is Glutamate 5-kinase.